The sequence spans 127 residues: UPF0212 protein VNG_1264C (127 aa).

This sequence belongs to the UPF0212 family.

This chain is UPF0212 protein VNG_1264C, found in Halobacterium salinarum (strain ATCC 700922 / JCM 11081 / NRC-1) (Halobacterium halobium).